Reading from the N-terminus, the 250-residue chain is MKYNNHDKIRDFIIIEAYMFRFKKKVKPEVDMTIKEFILLTYLFHQQENTLPFKKIVSDLCYKQSDLVQHIKVLVKHSYISKVRSKIDERNTYISISEEQREKIAERVTLFDQIIKQFNLADQSESQMIPKDSKEFLNLMMYTMYFKNIIKKHLTLSFVEFTILAIITSQNKNIVLLKDLIETIHHKYPQTVRALNNLKKQGYLIKERSTEDERKILIHMNDAQQDHAEQLLAQVNQLLADKNHLHLVFE.

2 DNA-binding regions (H-T-H motif) span residues 53–76 (FKKIVSDLCYKQSDLVQHIKVLVK) and 177–200 (LKDLIETIHHKYPQTVRALNNLKK).

The protein belongs to the SarA family.

It localises to the cytoplasm. Its function is as follows. Transcriptional regulator that controls expression of some virulence factors in a cell density-dependent manner. The sequence is that of HTH-type transcriptional regulator SarS (sarS) from Staphylococcus aureus (strain MRSA252).